The chain runs to 380 residues: L-lactate dehydrogenase (380 aa).

One can recognise an FMN hydroxy acid dehydrogenase domain in the interval 1–380 (MIISASTDYR…SADSLVQGLR (380 aa)). A substrate-binding site is contributed by Y24. S106 and Q127 together coordinate FMN. Y129 provides a ligand contact to substrate. Residue T155 coordinates FMN. R164 contacts substrate. K251 lines the FMN pocket. H275 acts as the Proton acceptor in catalysis. Residue R278 coordinates substrate. Residue 306–330 (DSGIRSGLDVVRMIALGADGVLLGR) coordinates FMN.

It belongs to the FMN-dependent alpha-hydroxy acid dehydrogenase family. It depends on FMN as a cofactor.

The protein resides in the cell inner membrane. The enzyme catalyses (S)-lactate + A = pyruvate + AH2. Its function is as follows. Catalyzes the conversion of L-lactate to pyruvate. Is coupled to the respiratory chain. This Serratia proteamaculans (strain 568) protein is L-lactate dehydrogenase.